The chain runs to 37 residues: M-oxotoxin-Ot2b (37 aa).

In terms of tissue distribution, expressed by the venom gland.

The protein resides in the secreted. In terms of biological role, disrupts biological membranes, particularly those rich in phosphocholine. Has antimicrobial activity against Gram-negative bacterium E.coli, Gram-positive bacteria B.subtilis and S.aureus, and hemolytic activity against sheep, pig and guinea pig red blood cells. Has insecticidal activity against S.frugiperda ovarian cells by opening non-selective ion channels. Enhances the insecticidal activity of spider venom neurotoxic peptides. The chain is M-oxotoxin-Ot2b from Oxyopes takobius (Lynx spider).